The sequence spans 78 residues: Large ribosomal subunit protein bL28 (78 aa).

The segment at 1–23 (MSRVCQVSGKRVQTGNNVSHANN) is disordered. The span at 11 to 22 (RVQTGNNVSHAN) shows a compositional bias: polar residues.

It belongs to the bacterial ribosomal protein bL28 family.

The polypeptide is Large ribosomal subunit protein bL28 (Stenotrophomonas maltophilia (strain R551-3)).